Reading from the N-terminus, the 236-residue chain is Lipoarabinomannan carrier protein LprG (236 aa).

The first 25 residues, 1-25, serve as a signal peptide directing secretion; sequence MQTRPRFAVQSLFAILATAAALVAG. The N-palmitoyl cysteine moiety is linked to residue C26. A lipid anchor (S-diacylglycerol cysteine) is attached at C26.

It belongs to the LppX/LprAFG lipoprotein family. In terms of assembly, interacts with itself, Ag85A (MSMEG_6398), LppI (MSMEG_3851) and LppK (MSMEG_3904) in vivo.

The protein localises to the cell inner membrane. It is found in the secreted. Its subcellular location is the cell wall. Functionally, helps membrane protein MSMEG_3069/MSMEI_2992 (P55) transport triacylglycerides (TAG) across the inner cell membrane into the periplasm and probably ultimately to the outer membrane. Binds TAG in its hydrophobic cavity and transfers it between lipid bilayers. TAG probably regulates lipid metabolism and growth regulation and plays a structural role in the outer membrane. Also binds mannosides, lipoarabinomannan and lipomannan and various glycolipids in the same cavity. Required for MSMEG_3069/MSMEI_2992 export activity. Export of ethidium bromide by MSMEG_3069/MSMEI_2992 can be complemented by the equivalent operon from M.tuberculosis (lprG-Rv1410c). Involved in mycolylation. The sequence is that of Lipoarabinomannan carrier protein LprG from Mycolicibacterium smegmatis (strain ATCC 700084 / mc(2)155) (Mycobacterium smegmatis).